An 802-amino-acid chain; its full sequence is Copper-exporting P-type ATPase (802 aa).

2 HMA domains span residues 5–70 (KKTT…YGVA) and 72–138 (ETVE…YDAS). Residues cysteine 16, cysteine 19, cysteine 83, and cysteine 86 each coordinate Cu(+). 6 helical membrane passes run 161–181 (LIIS…HLFN), 192–212 (WFQF…FYVG), 224–244 (MDVL…YEMV), 256–276 (LYFE…YLEA), 411–431 (YFVP…ITLV), and 438–458 (PALV…LGLA). Aspartate 495 (4-aspartylphosphate intermediate) is an active-site residue. Residues aspartate 690 and aspartate 694 each contribute to the Mg(2+) site. A run of 2 helical transmembrane segments spans residues 748–767 (LFWA…LGLL) and 771–790 (VAGA…ALRL).

It belongs to the cation transport ATPase (P-type) (TC 3.A.3) family. Type IB subfamily.

It is found in the cell membrane. It carries out the reaction Cu(+)(in) + ATP + H2O = Cu(+)(out) + ADP + phosphate + H(+). In terms of biological role, involved in copper export. The protein is Copper-exporting P-type ATPase (copA) of Staphylococcus aureus (strain USA300 / TCH1516).